A 318-amino-acid polypeptide reads, in one-letter code: Methionyl-tRNA formyltransferase (318 aa).

A (6S)-5,6,7,8-tetrahydrofolate-binding site is contributed by 112–115; it reads SILP.

This sequence belongs to the Fmt family.

It carries out the reaction L-methionyl-tRNA(fMet) + (6R)-10-formyltetrahydrofolate = N-formyl-L-methionyl-tRNA(fMet) + (6S)-5,6,7,8-tetrahydrofolate + H(+). Functionally, attaches a formyl group to the free amino group of methionyl-tRNA(fMet). The formyl group appears to play a dual role in the initiator identity of N-formylmethionyl-tRNA by promoting its recognition by IF2 and preventing the misappropriation of this tRNA by the elongation apparatus. This Shewanella oneidensis (strain ATCC 700550 / JCM 31522 / CIP 106686 / LMG 19005 / NCIMB 14063 / MR-1) protein is Methionyl-tRNA formyltransferase.